Reading from the N-terminus, the 121-residue chain is uncharacterized protein (121 aa).

It to E.coli YcjD and H.influenzae HI_1162.

This is an uncharacterized protein from Haemophilus influenzae (strain ATCC 51907 / DSM 11121 / KW20 / Rd).